The primary structure comprises 216 residues: ATP-dependent Clp protease proteolytic subunit 3 (216 aa).

Ser120 functions as the Nucleophile in the catalytic mechanism. The active site involves His145.

This sequence belongs to the peptidase S14 family. In terms of assembly, fourteen ClpP subunits assemble into 2 heptameric rings which stack back to back to give a disk-like structure with a central cavity, resembling the structure of eukaryotic proteasomes.

Its subcellular location is the cytoplasm. It catalyses the reaction Hydrolysis of proteins to small peptides in the presence of ATP and magnesium. alpha-casein is the usual test substrate. In the absence of ATP, only oligopeptides shorter than five residues are hydrolyzed (such as succinyl-Leu-Tyr-|-NHMec, and Leu-Tyr-Leu-|-Tyr-Trp, in which cleavage of the -Tyr-|-Leu- and -Tyr-|-Trp bonds also occurs).. Cleaves peptides in various proteins in a process that requires ATP hydrolysis. Has a chymotrypsin-like activity. Plays a major role in the degradation of misfolded proteins. The chain is ATP-dependent Clp protease proteolytic subunit 3 from Prochlorococcus marinus (strain SARG / CCMP1375 / SS120).